Reading from the N-terminus, the 460-residue chain is DNA repair protein RadA (460 aa).

The segment at 11–28 adopts a C4-type zinc-finger fold; sequence CNECGADYPRWQGQCSAC. 102–109 serves as a coordination point for ATP; it reads GNPGAGKS. The RadA KNRFG motif signature appears at 258–262; it reads KNRFG. The tract at residues 357-460 is lon-protease-like; that stretch reads DVFVNVVGGV…SDALSVFDDL (104 aa).

This sequence belongs to the RecA family. RadA subfamily.

Functionally, DNA-dependent ATPase involved in processing of recombination intermediates, plays a role in repairing DNA breaks. Stimulates the branch migration of RecA-mediated strand transfer reactions, allowing the 3' invading strand to extend heteroduplex DNA faster. Binds ssDNA in the presence of ADP but not other nucleotides, has ATPase activity that is stimulated by ssDNA and various branched DNA structures, but inhibited by SSB. Does not have RecA's homology-searching function. Genetic experiments involving combination of radA mutations with mutations in recA, recB, recG, recJ, recQ, ruvA and ruvC show it plays a role in recombination and recombinational repair, probably involving stabilizing or processing branched DNA or blocked replication forks. Is genetically synergistic to RecG and RuvABC. May be involved in recovery of genetic rearrangements during replication fork breakdown. In combination with RadD is important in recovery from double-strand DNA breaks (DSB). The polypeptide is DNA repair protein RadA (Escherichia coli (strain K12)).